A 424-amino-acid chain; its full sequence is Piriformospora indica-insensitive protein 2 (424 aa).

The signal sequence occupies residues 1–21; it reads MLWQTFFSSLLLLSLLFGCNG. LRR repeat units follow at residues 141–166, 167–190, 191–213, 214–237, 238–263, 265–286, 287–311, 312–336, 337–360, and 362–387; these read ASNLESLEFRSNPGLIGELPETIGNL, TKLKSLVVLENGFSGELPASICNL, KRLKRLVFAGNSFAGMIPNCFKG, LKELLILDLSRNSFSGTLPTSFGD, LVSLLKLDLSNNLLEGNLPQELGFLK, LTLLDLRNNRFSGGLSKNIENI, QSLTELVLSNNPMGEEDMVGTNWGK, MSNLVVLDLSKMGLRGEIPTSLTNL, KRLRFLGLNNNNLTGFVPSKKLEA, and PCLGALYINGNNLTGELRFSTKFYEK.

The protein resides in the cell membrane. In terms of biological role, required for growth promotion and enhanced seed production mediated by the endophytic fungus Piriformospora indica. The sequence is that of Piriformospora indica-insensitive protein 2 (PII-2) from Arabidopsis thaliana (Mouse-ear cress).